We begin with the raw amino-acid sequence, 240 residues long: UDP-2,3-diacylglucosamine hydrolase (240 aa).

The Mn(2+) site is built by D8, H10, D41, N79, and H114. 79–80 serves as a coordination point for substrate; the sequence is NR. Substrate is bound by residues D122, S160, N164, K167, and H195. Mn(2+) contacts are provided by H195 and H197.

The protein belongs to the LpxH family. The cofactor is Mn(2+).

It is found in the cell inner membrane. It catalyses the reaction UDP-2-N,3-O-bis[(3R)-3-hydroxytetradecanoyl]-alpha-D-glucosamine + H2O = 2-N,3-O-bis[(3R)-3-hydroxytetradecanoyl]-alpha-D-glucosaminyl 1-phosphate + UMP + 2 H(+). Its pathway is glycolipid biosynthesis; lipid IV(A) biosynthesis; lipid IV(A) from (3R)-3-hydroxytetradecanoyl-[acyl-carrier-protein] and UDP-N-acetyl-alpha-D-glucosamine: step 4/6. Hydrolyzes the pyrophosphate bond of UDP-2,3-diacylglucosamine to yield 2,3-diacylglucosamine 1-phosphate (lipid X) and UMP by catalyzing the attack of water at the alpha-P atom. Involved in the biosynthesis of lipid A, a phosphorylated glycolipid that anchors the lipopolysaccharide to the outer membrane of the cell. The sequence is that of UDP-2,3-diacylglucosamine hydrolase from Pectobacterium carotovorum subsp. carotovorum (strain PC1).